The primary structure comprises 183 residues: Large ribosomal subunit protein uL22 (183 aa).

Residues 163–183 form a disordered region; that stretch reads KTAAKKQSAKKLKKQKMMYRE. Positions 165–183 are enriched in basic residues; sequence AAKKQSAKKLKKQKMMYRE.

It belongs to the universal ribosomal protein uL22 family.

This is Large ribosomal subunit protein uL22 (rpl-17) from Pectinaria gouldii (Trumpet worm).